A 287-amino-acid polypeptide reads, in one-letter code: Glutamate racemase (287 aa).

Substrate contacts are provided by residues 32–33 (DS) and 64–65 (YG). Residue C96 is the Proton donor/acceptor of the active site. 97 to 98 (NT) serves as a coordination point for substrate. C208 functions as the Proton donor/acceptor in the catalytic mechanism. 209 to 210 (TH) provides a ligand contact to substrate.

This sequence belongs to the aspartate/glutamate racemases family.

It carries out the reaction L-glutamate = D-glutamate. Its pathway is cell wall biogenesis; peptidoglycan biosynthesis. Its function is as follows. Provides the (R)-glutamate required for cell wall biosynthesis. The polypeptide is Glutamate racemase (Serratia proteamaculans (strain 568)).